The following is a 241-amino-acid chain: Ribonuclease HII (241 aa).

Residues 27–227 (GPVAGVDEAG…REARSLRLED (201 aa)) enclose the RNase H type-2 domain. Asp-33, Glu-34, and Asp-128 together coordinate a divalent metal cation.

The protein belongs to the RNase HII family. Requires Mn(2+) as cofactor. It depends on Mg(2+) as a cofactor.

It is found in the cytoplasm. It catalyses the reaction Endonucleolytic cleavage to 5'-phosphomonoester.. Its function is as follows. Endonuclease that specifically degrades the RNA of RNA-DNA hybrids. In Frankia alni (strain DSM 45986 / CECT 9034 / ACN14a), this protein is Ribonuclease HII.